Consider the following 118-residue polypeptide: Large ribosomal subunit protein uL18 (118 aa).

This sequence belongs to the universal ribosomal protein uL18 family. In terms of assembly, part of the 50S ribosomal subunit; part of the 5S rRNA/L5/L18/L25 subcomplex. Contacts the 5S and 23S rRNAs.

Its function is as follows. This is one of the proteins that bind and probably mediate the attachment of the 5S RNA into the large ribosomal subunit, where it forms part of the central protuberance. This is Large ribosomal subunit protein uL18 from Phenylobacterium zucineum (strain HLK1).